The chain runs to 502 residues: Type II methyltransferase M.HincII (502 aa).

This sequence belongs to the N(4)/N(6)-methyltransferase family.

The catalysed reaction is a 2'-deoxyadenosine in DNA + S-adenosyl-L-methionine = an N(6)-methyl-2'-deoxyadenosine in DNA + S-adenosyl-L-homocysteine + H(+). A gamma subtype methylase that recognizes the double-stranded sequence 5'-GTYRAC-3', methylates A-5 on both strands, and protects the DNA from cleavage by the HincII endonuclease. The sequence is that of Type II methyltransferase M.HincII from Haemophilus influenzae.